We begin with the raw amino-acid sequence, 368 residues long: Endophilin-A2 (368 aa).

Residues Met1–Val21 form a membrane-binding amphipathic helix region. The BAR domain occupies Ser18–Ser249. The tract at residues Pro60–Pro87 is required for dimerization upon membrane association. Positions Asp180–Arg250 form a coiled coil. The tract at residues Leu218–Glu254 is interaction with ARC. The disordered stretch occupies residues Val244 to Asp307. Positions Arg245–Phe263 are enriched in basic and acidic residues. 2 positions are modified to phosphoserine: Ser288 and Ser292. One can recognise an SH3 domain in the interval Leu306–Pro365. Tyr315 is subject to Phosphotyrosine.

This sequence belongs to the endophilin family. Interacts with ARC, SYNJ1 and DNM1. Interacts with PDCD6IP. Interacts with BIN2.

It localises to the cytoplasm. It is found in the early endosome membrane. The protein resides in the cell projection. Its subcellular location is the podosome. Implicated in endocytosis. May recruit other proteins to membranes with high curvature. In Mus musculus (Mouse), this protein is Endophilin-A2 (Sh3gl1).